The sequence spans 75 residues: MARYFRRRKFCRFTAEGVVEIDYKDIATLKNYITESGKIVPSRITGTRAKYQRQLARCIKRARYLSLLPYTDRHQ.

Belongs to the bacterial ribosomal protein bS18 family. Part of the 30S ribosomal subunit. Forms a tight heterodimer with protein bS6.

Functionally, binds as a heterodimer with protein bS6 to the central domain of the 16S rRNA, where it helps stabilize the platform of the 30S subunit. This is Small ribosomal subunit protein bS18 from Yersinia enterocolitica serotype O:8 / biotype 1B (strain NCTC 13174 / 8081).